The sequence spans 99 residues: DNA-binding protein HU (99 aa).

The protein belongs to the bacterial histone-like protein family. Homodimer.

In terms of biological role, histone-like DNA-binding protein which is capable of wrapping DNA to stabilize it, and thus to prevent its denaturation under extreme environmental conditions. The chain is DNA-binding protein HU (hup) from Rickettsia typhi (strain ATCC VR-144 / Wilmington).